Consider the following 705-residue polypeptide: tRNA 5-methylaminomethyl-2-thiouridine biosynthesis bifunctional protein MnmC (705 aa).

Residues 1–241 form a tRNA (mnm(5)s(2)U34)-methyltransferase region; sequence MTIKTADIQF…KREMLAGIIA (241 aa). The tract at residues 289 to 705 is FAD-dependent cmnm(5)s(2)U34 oxidoreductase; that stretch reads IGAGIAGASM…LIRQLIRREV (417 aa).

The protein in the N-terminal section; belongs to the methyltransferase superfamily. tRNA (mnm(5)s(2)U34)-methyltransferase family. It in the C-terminal section; belongs to the DAO family. FAD serves as cofactor.

The protein localises to the cytoplasm. The enzyme catalyses 5-aminomethyl-2-thiouridine(34) in tRNA + S-adenosyl-L-methionine = 5-methylaminomethyl-2-thiouridine(34) in tRNA + S-adenosyl-L-homocysteine + H(+). Catalyzes the last two steps in the biosynthesis of 5-methylaminomethyl-2-thiouridine (mnm(5)s(2)U) at the wobble position (U34) in tRNA. Catalyzes the FAD-dependent demodification of cmnm(5)s(2)U34 to nm(5)s(2)U34, followed by the transfer of a methyl group from S-adenosyl-L-methionine to nm(5)s(2)U34, to form mnm(5)s(2)U34. The sequence is that of tRNA 5-methylaminomethyl-2-thiouridine biosynthesis bifunctional protein MnmC from Pseudoalteromonas atlantica (strain T6c / ATCC BAA-1087).